The sequence spans 66 residues: DNA gyrase inhibitor YacG (66 aa).

Zn(2+) contacts are provided by C9, C12, C28, and C32.

Belongs to the DNA gyrase inhibitor YacG family. Interacts with GyrB. Zn(2+) serves as cofactor.

In terms of biological role, inhibits all the catalytic activities of DNA gyrase by preventing its interaction with DNA. Acts by binding directly to the C-terminal domain of GyrB, which probably disrupts DNA binding by the gyrase. This Pseudomonas fluorescens (strain SBW25) protein is DNA gyrase inhibitor YacG.